A 95-amino-acid polypeptide reads, in one-letter code: Aspartyl/glutamyl-tRNA(Asn/Gln) amidotransferase subunit C (95 aa).

The tract at residues 51–95 (PTSHATLTSSRLREDVTRPSLPPEKSLANAPAKSDTSFAVPKIIE) is disordered.

The protein belongs to the GatC family. In terms of assembly, heterotrimer of A, B and C subunits.

The catalysed reaction is L-glutamyl-tRNA(Gln) + L-glutamine + ATP + H2O = L-glutaminyl-tRNA(Gln) + L-glutamate + ADP + phosphate + H(+). It carries out the reaction L-aspartyl-tRNA(Asn) + L-glutamine + ATP + H2O = L-asparaginyl-tRNA(Asn) + L-glutamate + ADP + phosphate + 2 H(+). In terms of biological role, allows the formation of correctly charged Asn-tRNA(Asn) or Gln-tRNA(Gln) through the transamidation of misacylated Asp-tRNA(Asn) or Glu-tRNA(Gln) in organisms which lack either or both of asparaginyl-tRNA or glutaminyl-tRNA synthetases. The reaction takes place in the presence of glutamine and ATP through an activated phospho-Asp-tRNA(Asn) or phospho-Glu-tRNA(Gln). The protein is Aspartyl/glutamyl-tRNA(Asn/Gln) amidotransferase subunit C of Myxococcus xanthus (strain DK1622).